The chain runs to 247 residues: 3-oxoacyl-[acyl-carrier-protein] reductase FabG (247 aa).

NADP(+)-binding positions include 12 to 15 (GASR), Thr37, 62 to 63 (DV), and Asn89. A substrate-binding site is contributed by Ser141. The Proton acceptor role is filled by Tyr154. NADP(+) contacts are provided by residues 154–158 (YAAAK) and Ile187.

The protein belongs to the short-chain dehydrogenases/reductases (SDR) family. In terms of assembly, homotetramer.

The catalysed reaction is a (3R)-hydroxyacyl-[ACP] + NADP(+) = a 3-oxoacyl-[ACP] + NADPH + H(+). Its pathway is lipid metabolism; fatty acid biosynthesis. In terms of biological role, catalyzes the NADPH-dependent reduction of beta-ketoacyl-ACP substrates to beta-hydroxyacyl-ACP products, the first reductive step in the elongation cycle of fatty acid biosynthesis. This Pseudomonas aeruginosa (strain ATCC 15692 / DSM 22644 / CIP 104116 / JCM 14847 / LMG 12228 / 1C / PRS 101 / PAO1) protein is 3-oxoacyl-[acyl-carrier-protein] reductase FabG (fabG).